We begin with the raw amino-acid sequence, 546 residues long: Nuclear pore complex protein Nup58 (546 aa).

17 repeat units span residues 22 to 23, 36 to 37, 45 to 46, 64 to 65, 73 to 74, 82 to 83, 92 to 93, 101 to 102, 110 to 111, 119 to 120, 128 to 129, 137 to 138, 146 to 147, 155 to 156, 166 to 167, 197 to 198, and 199 to 200. Positions 22-200 are 17 X 2 AA repeats of F-G; sequence FGARPATTTA…TTAPPAFGFG (179 aa).

This sequence belongs to the NUP58 family. As to quaternary structure, component of the nuclear pore complex. Interacts with Nup54. Interacts (via C-terminus) with fs(1)Yb; this interaction occurs in a RNA-independent manner. Interacts with sbr/nxf1. Interacts with Nxt1. Post-translationally, O-glycosylated; contains O-GlcNAc. O-GlcNAcylation increases with increasing ambient temperature.

It is found in the nucleus. The protein localises to the nuclear pore complex. Functionally, component of the nuclear pore complex, a complex required for the trafficking across the nuclear membrane. Together with Nup54, required for transposable element silencing regulation in ovarian follicle cells. By interacting with the nuclear (Nxf1/Nxt1) and cytosolic (fs(1)Yb) components of the flamenco (flam) transcripts processing pathway, enables export and subsequent piRNA production. This Drosophila melanogaster (Fruit fly) protein is Nuclear pore complex protein Nup58.